The chain runs to 101 residues: NAD(P)H-quinone oxidoreductase subunit 4L, chloroplastic (101 aa).

The next 3 membrane-spanning stretches (helical) occupy residues 2-22 (ILEH…YGLI), 32-52 (MCLE…SDFF), and 61-81 (IFCI…LAIV).

The protein belongs to the complex I subunit 4L family. As to quaternary structure, NDH is composed of at least 16 different subunits, 5 of which are encoded in the nucleus.

The protein resides in the plastid. The protein localises to the chloroplast thylakoid membrane. The enzyme catalyses a plastoquinone + NADH + (n+1) H(+)(in) = a plastoquinol + NAD(+) + n H(+)(out). It carries out the reaction a plastoquinone + NADPH + (n+1) H(+)(in) = a plastoquinol + NADP(+) + n H(+)(out). NDH shuttles electrons from NAD(P)H:plastoquinone, via FMN and iron-sulfur (Fe-S) centers, to quinones in the photosynthetic chain and possibly in a chloroplast respiratory chain. The immediate electron acceptor for the enzyme in this species is believed to be plastoquinone. Couples the redox reaction to proton translocation, and thus conserves the redox energy in a proton gradient. The polypeptide is NAD(P)H-quinone oxidoreductase subunit 4L, chloroplastic (Arabidopsis thaliana (Mouse-ear cress)).